A 105-amino-acid polypeptide reads, in one-letter code: MNIYDVLIWMALGMTALLIQYGIWRYLKGKGKDTIPLQICGFLANFFFIFALAWGYSSFSEREYQAIGMGFIFFGGTALIPAIITYRLANHPAKKIRESSDTISA.

Helical transmembrane passes span 3-23, 35-55, and 66-86; these read IYDV…QYGI, IPLQ…LAWG, and AIGM…IITY.

Belongs to the PceB family.

It localises to the cell membrane. Functionally, may act as a membrane anchor for the tetrachloroethene reductive dehalogenase PceA. This chain is Probable tetrachloroethene reductive dehalogenase membrane anchor protein, found in Dehalobacter restrictus (strain DSM 9455 / PER-K23).